Consider the following 340-residue polypeptide: Ketol-acid reductoisomerase (NADP(+)) (340 aa).

A KARI N-terminal Rossmann domain is found at 3-182; sequence VTMYYEEDVE…GCARVGIIET (180 aa). Residues 26 to 29, Arg49, Ser53, and 83 to 86 contribute to the NADP(+) site; these read YGSQ and DELQ. His108 is a catalytic residue. Gly134 contacts NADP(+). The KARI C-terminal knotted domain occupies 183 to 328; sequence TFKEETEEDL…AELRKAMPFT (146 aa). Residues Asp191, Glu195, Glu227, and Glu231 each contribute to the Mg(2+) site. Ser252 is a substrate binding site.

This sequence belongs to the ketol-acid reductoisomerase family. Requires Mg(2+) as cofactor.

The catalysed reaction is (2R)-2,3-dihydroxy-3-methylbutanoate + NADP(+) = (2S)-2-acetolactate + NADPH + H(+). It catalyses the reaction (2R,3R)-2,3-dihydroxy-3-methylpentanoate + NADP(+) = (S)-2-ethyl-2-hydroxy-3-oxobutanoate + NADPH + H(+). It participates in amino-acid biosynthesis; L-isoleucine biosynthesis; L-isoleucine from 2-oxobutanoate: step 2/4. The protein operates within amino-acid biosynthesis; L-valine biosynthesis; L-valine from pyruvate: step 2/4. Functionally, involved in the biosynthesis of branched-chain amino acids (BCAA). Catalyzes an alkyl-migration followed by a ketol-acid reduction of (S)-2-acetolactate (S2AL) to yield (R)-2,3-dihydroxy-isovalerate. In the isomerase reaction, S2AL is rearranged via a Mg-dependent methyl migration to produce 3-hydroxy-3-methyl-2-ketobutyrate (HMKB). In the reductase reaction, this 2-ketoacid undergoes a metal-dependent reduction by NADPH to yield (R)-2,3-dihydroxy-isovalerate. In Lactococcus lactis subsp. cremoris (strain SK11), this protein is Ketol-acid reductoisomerase (NADP(+)).